A 673-amino-acid polypeptide reads, in one-letter code: Centrosomal protein kizuna (673 aa).

Disordered stretches follow at residues 175–207, 255–413, 432–480, 494–516, and 613–673; these read TEHK…TDSC, GSNT…ALKL, QTLS…NSVK, ECGR…ILND, and SEAS…DFYD. Composition is skewed to polar residues over residues 196–207 and 255–266; these read QTAQSSNVTDSC and GSNTRHGKSNLS. Basic and acidic residues-rich tracts occupy residues 267 to 293 and 303 to 316; these read EGKK…DLKC and ILTR…EKRA. Phosphoserine is present on residues Ser-317 and Ser-321. Basic and acidic residues predominate over residues 331 to 357; the sequence is SENKWSQEKHSPWEGVSDHLAHREPKS. Thr-379 carries the phosphothreonine; by PLK1 modification. The segment covering 471–480 has biased composition (basic and acidic residues); the sequence is TLKEHDNSVK. 2 stretches are compositionally biased toward low complexity: residues 503–512 and 613–625; these read SSESSCSLPS and SEAS…GSPL. Phosphoserine is present on residues Ser-647, Ser-650, and Ser-652.

Belongs to the kizuna family. As to quaternary structure, interacts with AKAP9, CEP72, ODF2, PCNT and TUBGCP2. In terms of processing, phosphorylation at Thr-379 by PLK1 is not needed for centrosomal localization or pericentriolar material expansion but is indispensable for spindle-pole stabilization.

The protein localises to the cytoplasm. It is found in the cytoskeleton. It localises to the microtubule organizing center. Its subcellular location is the centrosome. The protein resides in the cilium basal body. Its function is as follows. Centrosomal protein required for establishing a robust mitotic centrosome architecture that can endure the forces that converge on the centrosomes during spindle formation. Required for stabilizing the expanded pericentriolar material around the centriole. The chain is Centrosomal protein kizuna (KIZ) from Homo sapiens (Human).